The sequence spans 379 residues: Chaperone protein DnaJ (379 aa).

One can recognise a J domain in the interval 5 to 70 (DYYEVLGLSK…EKKAMYDQYG (66 aa)). The segment at 136–214 (GCKKDIRIHT…CHGDGRVHKA (79 aa)) adopts a CR-type zinc-finger fold. Residues Cys-149, Cys-152, Cys-166, Cys-169, Cys-188, Cys-191, Cys-202, and Cys-205 each coordinate Zn(2+). 4 CXXCXGXG motif repeats span residues 149–156 (CDTCHGTG), 166–173 (CSHCHGSG), 188–195 (CPSCHGTG), and 202–209 (CRSCHGDG).

It belongs to the DnaJ family. Homodimer. The cofactor is Zn(2+).

The protein resides in the cytoplasm. In terms of biological role, participates actively in the response to hyperosmotic and heat shock by preventing the aggregation of stress-denatured proteins and by disaggregating proteins, also in an autonomous, DnaK-independent fashion. Unfolded proteins bind initially to DnaJ; upon interaction with the DnaJ-bound protein, DnaK hydrolyzes its bound ATP, resulting in the formation of a stable complex. GrpE releases ADP from DnaK; ATP binding to DnaK triggers the release of the substrate protein, thus completing the reaction cycle. Several rounds of ATP-dependent interactions between DnaJ, DnaK and GrpE are required for fully efficient folding. Also involved, together with DnaK and GrpE, in the DNA replication of plasmids through activation of initiation proteins. The chain is Chaperone protein DnaJ from Mannheimia haemolytica (Pasteurella haemolytica).